A 349-amino-acid chain; its full sequence is Ion-translocating oxidoreductase complex subunit D (349 aa).

4 helical membrane passes run 20–40 (IMFLVVLSCIPGLCTEIYFFG), 42–62 (GVLIQTLLFVIISLLFEIIIL), 83–105 (VLLGLSTPCALPWWMIIFSCFFA), and 120–140 (IFNPAMIGYVVLLISFPVHMT). FMN phosphoryl threonine is present on Thr184. 5 helical membrane passes run 212-232 (IVSIAWKYINISFLIGGCFLL), 236-256 (VICWRIPLSFLSSLIFFSSIT), 263-283 (FFCSPLFHLFSGGTMMCAFFI), 291-311 (SCTKIGKIFFGLIIGFLVWII), and 319-339 (DGIAFSVLFANMIVPLMDAYL).

This sequence belongs to the NqrB/RnfD family. In terms of assembly, the complex is composed of six subunits: RnfA, RnfB, RnfC, RnfD, RnfE and RnfG. Requires FMN as cofactor.

Its subcellular location is the cell inner membrane. Functionally, part of a membrane-bound complex that couples electron transfer with translocation of ions across the membrane. This is Ion-translocating oxidoreductase complex subunit D from Buchnera aphidicola subsp. Schizaphis graminum (strain Sg).